Here is a 291-residue protein sequence, read N- to C-terminus: Hydroxysteroid 11-beta-dehydrogenase 1-like protein B (291 aa).

An N-terminal signal peptide occupies residues 1-17; it reads MAGVILLLLSLCVGYIA. NADP(+) contacts are provided by residues 40–66, 91–92, and 118–120; these read GSSTGLGEQIAYEFARMGAHIMITARR, DM, and NHI. Position 170 (Ser-170) interacts with substrate. Residue Tyr-183 is the Proton acceptor of the active site. Residues 183–187 and 216–222 contribute to the NADP(+) site; these read YCASK and GYIDTEN.

The protein belongs to the short-chain dehydrogenases/reductases (SDR) family.

Its subcellular location is the secreted. The enzyme catalyses cortisone + NADPH + H(+) = cortisol + NADP(+). Unidirectional NADP(+)-dependent cortisol dehydrogenase (in vitro). The polypeptide is Hydroxysteroid 11-beta-dehydrogenase 1-like protein B (hsd11b1l-b) (Xenopus laevis (African clawed frog)).